The sequence spans 156 residues: RNA pyrophosphohydrolase (156 aa).

The region spanning 6–148 is the Nudix hydrolase domain; that stretch reads NYRPNVAAIV…KKNIYVRVIK (143 aa). Residues 43-64 carry the Nudix box motif; that stretch reads GGIDKGESVKNALFRELKEEIG.

This sequence belongs to the Nudix hydrolase family. RppH subfamily. A divalent metal cation is required as a cofactor.

In terms of biological role, accelerates the degradation of transcripts by removing pyrophosphate from the 5'-end of triphosphorylated RNA, leading to a more labile monophosphorylated state that can stimulate subsequent ribonuclease cleavage. The chain is RNA pyrophosphohydrolase from Campylobacter jejuni subsp. jejuni serotype O:2 (strain ATCC 700819 / NCTC 11168).